Consider the following 147-residue polypeptide: Protegrin-2 (147 aa).

Residues 1–29 (METQRASLCLGRWSLWLLLLALVVPSASA) form the signal peptide. A propeptide spanning residues 30–130 (QALSYREAVL…DITCNEVQGV (101 aa)) is cleaved from the precursor. Residues 61–80 (DQPPKADEDPGTPKPVSFTV) form a disordered region. 4 disulfide bridges follow: Cys85-Cys96, Cys107-Cys124, Cys136-Cys145, and Cys138-Cys143. Residue Val146 is modified to Valine amide.

Belongs to the cathelicidin family.

It is found in the secreted. In terms of biological role, microbicidal activity. Active against E.coli, Listeria monocytogenes and C.albicans, in vitro. This Sus scrofa (Pig) protein is Protegrin-2 (NPG2).